A 505-amino-acid chain; its full sequence is MDLLLIEKTLVALFAAIIGAILISKLRGKKFKLPPGPIPVPIFGNWLQVGDDLNHRNLTDLAKRFGEILLLRMGQRNLVVVSSPELAKEVLHTQGVEFGSRTRNVVFDIFTGKGQDMVFTVYGEHWRKMRRIMTVPFFTNKVVQQYRYGWEAEAAAVVDDVKKNPAAATEGIVIRRRLQLMMYNNMFRIMFDRRFESEDDPLFLKLKALNGERSRLAQSFEYNYGDFIPILRPFLRNYLKLCKEVKDKRIQLFKDYFVDERKKIGSTKKMDNNQLKCAIDHILEAKEKGEINEDNVLYIVENINVAAIETTLWSIEWGIAELVNHPEIQAKLRHELDTKLGPGVQITEPDVQNLPYLQAVVKETLRLRMAIPLLVPHMNLHDAKLGGFDIPAESKILVNAWWLANNPDQWKKPEEFRPERFLEEEAKVEANGNDFRYLPFGVGRRSCPGIILALPILGITIGRLVQNFELLPPPGQSKIDTDEKGGQFSLHILKHSTIVAKPRSF.

Residues 3–23 traverse the membrane as a helical segment; sequence LLLIEKTLVALFAAIIGAILI. Residues 213-218 and Ala306 contribute to the (E)-cinnamate site; that span reads RSRLAQ. Cys447 is a binding site for heme.

It belongs to the cytochrome P450 family. Heme is required as a cofactor.

It localises to the membrane. It catalyses the reaction (E)-cinnamate + reduced [NADPH--hemoprotein reductase] + O2 = (E)-4-coumarate + oxidized [NADPH--hemoprotein reductase] + H2O + H(+). Its pathway is phenylpropanoid metabolism; trans-4-coumarate biosynthesis; trans-4-coumarate from trans-cinnamate: step 1/1. With respect to regulation, inactivated by piperonylic acid. Catalyzes the first oxidative step of the phenylpropanoid pathway in higher plants by transforming trans-cinnamate into p-coumarate. The compounds formed by this pathway are essential components for lignification, pollination, and defense against ultraviolet light, predators and pathogens. Can also use 2-naphthoic acid as substrate. The protein is Trans-cinnamate 4-monooxygenase of Helianthus tuberosus (Jerusalem artichoke).